Here is a 359-residue protein sequence, read N- to C-terminus: UbiA prenyltransferase domain-containing protein 1 homolog (359 aa).

Over residues 1–16 (MATSSQLLPNGNLSRN) the composition is skewed to polar residues. Positions 1-23 (MATSSQLLPNGNLSRNGKTKTED) are disordered. The next 8 membrane-spanning stretches (helical) occupy residues 67 to 89 (ALRP…LAYR), 98 to 118 (LATF…GNVV), 148 to 168 (VVSL…LLAV), 177 to 197 (LALI…GIGF), 200 to 220 (IALG…LFAF), 262 to 284 (IVTL…LLFA), 289 to 311 (FFIF…PQAF), and 335 to 355 (FFFG…PTFG).

Belongs to the UbiA prenyltransferase family.

The protein localises to the mitochondrion membrane. The protein operates within quinol/quinone metabolism; menaquinone biosynthesis. Its function is as follows. Prenyltransferase that mediates the formation of menaquinone-4 (MK-4), a vitamin K2 isoform, thereby acting as a mitochondrial electron carrier. Mediates the conversion of phylloquinone (PK) into MK-4, probably by cleaving the side chain of phylloquinone (PK) to release 2-methyl-1,4-naphthoquinone (menadione; K3) and then prenylating it with geranylgeranyl pyrophosphate (GGPP) to form MK-4. MK-4 acts as a membrane electron carrier downstream of a electron transport chain complex, improving mitochondrial oxygen consumption. This Drosophila melanogaster (Fruit fly) protein is UbiA prenyltransferase domain-containing protein 1 homolog (heix).